The chain runs to 117 residues: Large ribosomal subunit protein bL20 (117 aa).

The protein belongs to the bacterial ribosomal protein bL20 family.

In terms of biological role, binds directly to 23S ribosomal RNA and is necessary for the in vitro assembly process of the 50S ribosomal subunit. It is not involved in the protein synthesizing functions of that subunit. This Brachyspira hyodysenteriae (strain ATCC 49526 / WA1) protein is Large ribosomal subunit protein bL20.